The chain runs to 363 residues: S-methylmethionine--homocysteine S-methyltransferase BHMT2 (363 aa).

Residues 11-305 enclose the Hcy-binding domain; that stretch reads KGILERLDSG…YHIRAIAEEL (295 aa). Positions 208, 290, and 291 each coordinate Zn(2+). Residue serine 321 is modified to Phosphoserine.

Homotetramer. It depends on Zn(2+) as a cofactor. In terms of tissue distribution, expressed in fetal heart, lung, liver, kidney and eye.

The catalysed reaction is S-methyl-L-methionine + L-homocysteine = 2 L-methionine + H(+). Its pathway is amino-acid biosynthesis; L-methionine biosynthesis via de novo pathway; L-methionine from L-homocysteine (BhmT route): step 1/1. Involved in the regulation of homocysteine metabolism. Converts homocysteine to methionine using S-methylmethionine (SMM) as a methyl donor. The polypeptide is S-methylmethionine--homocysteine S-methyltransferase BHMT2 (Bhmt2) (Mus musculus (Mouse)).